A 155-amino-acid chain; its full sequence is Small ribosomal subunit protein uS7cz/uS7cy (155 aa).

It belongs to the universal ribosomal protein uS7 family. Part of the 30S ribosomal subunit.

It localises to the plastid. It is found in the chloroplast. Its function is as follows. One of the primary rRNA binding proteins, it binds directly to 16S rRNA where it nucleates assembly of the head domain of the 30S subunit. The chain is Small ribosomal subunit protein uS7cz/uS7cy (rps7-A) from Lemna minor (Common duckweed).